A 274-amino-acid polypeptide reads, in one-letter code: Large ribosomal subunit protein uL2cz/uL2cy (274 aa).

The span at 1–15 shows a compositional bias: polar residues; it reads MAINLYKTSTPSTRN. Disordered stretches follow at residues 1–22 and 225–274; these read MAIN…DSQV and PVDH…RRSK.

This sequence belongs to the universal ribosomal protein uL2 family. As to quaternary structure, part of the 50S ribosomal subunit.

It localises to the plastid. The protein resides in the chloroplast. The protein is Large ribosomal subunit protein uL2cz/uL2cy (rpl2-A) of Lobularia maritima (Sweet alyssum).